Reading from the N-terminus, the 412-residue chain is G-protein coupled receptor homolog UL33 (412 aa).

Residues 1–29 (MDTIIHNSTRNNTPPHINDTCNMTGPLFA) are Virion surface-facing. N-linked (GlcNAc...) asparagine; by host glycosylation is found at N7, N18, and N22. The chain crosses the membrane as a helical span at residues 30–54 (IRTTEAVLNTFIIFVGGPLNAIVLI). The Intravirion segment spans residues 55–70 (TQLLTNRVLGYSTPTI). Residues 71 to 95 (YMTNLYSTNFLTLTVLPFIVLSNQW) form a helical membrane-spanning segment. Over 96–102 (LLPAGVA) the chain is Virion surface. The helical transmembrane segment at 103–129 (SCKFLSVIYYSSCTVGFATVALIAADR) threads the bilayer. The cysteines at positions 104 and 188 are disulfide-linked. Residues 130–138 (YRVLHKRTY) lie on the Intravirion side of the membrane. The chain crosses the membrane as a helical span at residues 139–160 (ARQSYRSTYMILLLTWLAGLIF). Residues 161-203 (SVPAAVYTTVVMHHDANDTNNTNGHATCVLYFVAEEVHTVLLS) are Virion surface-facing. N-linked (GlcNAc...) asparagine; by host glycans are attached at residues N177 and N180. A helical transmembrane segment spans residues 204-224 (WKVLLTMVWGAAPVIMMTWFY). At 225 to 240 (AFFYSTVQRTSQKQRS) the chain is on the intravirion side. A helical membrane pass occupies residues 241–267 (RTLTFVSVLLISFVALQTPYVSLMIFN). Over 268–281 (SYATTAWPMQCEHL) the chain is Virion surface. Residues 282–305 (TLRRTIGTLARVVPHLHCLINPIL) form a helical membrane-spanning segment. Over 306-412 (YALLGHDFLQ…SQSHHNLSGV (107 aa)) the chain is Intravirion. The tract at residues 377–412 (NFPSGTWKGGQKTASNDTSTKIPHRLSQSHHNLSGV) is disordered. Positions 388-397 (KTASNDTSTK) are enriched in polar residues.

It belongs to the G-protein coupled receptor 1 family. In terms of assembly, heterodimerizes with US28.

Its subcellular location is the virion. The protein resides in the host cell membrane. It is found in the host cytoplasm. Functionally, G-protein-coupled receptor (vGPCR) that constitutively activates multiple oncogenic signaling pathways including STAT3, AP-1, phospholipase C, NF-kappa-B or cAMP-responsive element (CRE) pathways. Plays an important role in viral reactivation from latency through activation of host CREB1, facilitating its recruitment to the viral major immediate early (MIE) genes. In turn, expression of the MIE-driven genes such as UL123 are de-repressed. Also facilitates virus dissemination via the extracellular and cell-to-cell route. This chain is G-protein coupled receptor homolog UL33 (UL33), found in Human cytomegalovirus (strain AD169) (HHV-5).